The following is a 583-amino-acid chain: ATP-dependent lipid A-core flippase (583 aa).

6 helical membrane-spanning segments follow: residues 32–52 (VAFLISIIALVTFSATNTGFL), 71–91 (LHLLPFMLFGLLAIRALAGFI), 115–135 (LMSLPVSFFDAVSAGVVTSKL), 160–180 (ILGMVGYMLYLDWQLTLIFAV), 259–279 (SMVVELLAGVALALVVFYAVG), and 286–306 (FAAFIGALLMLIGPVKTLTSL). In terms of domain architecture, ABC transmembrane type-1 spans 34–312 (FLISIIALVT…LTSLNEELQV (279 aa)). An ABC transporter domain is found at 344–580 (IVFENVTLQY…DGHYAKLYRK (237 aa)). 378–385 (GRSGGGKT) lines the ATP pocket.

It belongs to the ABC transporter superfamily. Lipid exporter (TC 3.A.1.106) family. In terms of assembly, homodimer.

The protein resides in the cell inner membrane. The catalysed reaction is ATP + H2O + lipid A-core oligosaccharideSide 1 = ADP + phosphate + lipid A-core oligosaccharideSide 2.. Its function is as follows. Involved in lipopolysaccharide (LPS) biosynthesis. Translocates lipid A-core from the inner to the outer leaflet of the inner membrane. Transmembrane domains (TMD) form a pore in the inner membrane and the ATP-binding domain (NBD) is responsible for energy generation. This is ATP-dependent lipid A-core flippase from Methylobacillus flagellatus (strain ATCC 51484 / DSM 6875 / VKM B-1610 / KT).